Here is a 331-residue protein sequence, read N- to C-terminus: Probable tRNA pseudouridine synthase B (331 aa).

The segment covering 1-15 has biased composition (basic and acidic residues); sequence MRCSQREVFVKREEP. The interval 1 to 27 is disordered; that stretch reads MRCSQREVFVKREEPTNPEWGKPPSQR. The active-site Nucleophile is the aspartate 71. A PUA domain is found at 238–313; the sequence is LPKIWVRDSA…AVVRTDRVVM (76 aa).

This sequence belongs to the pseudouridine synthase TruB family. Type 2 subfamily.

The enzyme catalyses uridine(55) in tRNA = pseudouridine(55) in tRNA. Its function is as follows. Could be responsible for synthesis of pseudouridine from uracil-55 in the psi GC loop of transfer RNAs. This Pyrobaculum arsenaticum (strain DSM 13514 / JCM 11321 / PZ6) protein is Probable tRNA pseudouridine synthase B.